A 201-amino-acid polypeptide reads, in one-letter code: Small ribosomal subunit protein uS4 (201 aa).

A disordered region spans residues 22–47; that stretch reads TGKELARRPYAPGDHGNDRRGKLSEY. Positions 93 to 153 constitute an S4 RNA-binding domain; the sequence is RRLDNMVYRL…EKSKNLDVIK (61 aa).

The protein belongs to the universal ribosomal protein uS4 family. Part of the 30S ribosomal subunit. Contacts protein S5. The interaction surface between S4 and S5 is involved in control of translational fidelity.

In terms of biological role, one of the primary rRNA binding proteins, it binds directly to 16S rRNA where it nucleates assembly of the body of the 30S subunit. With S5 and S12 plays an important role in translational accuracy. In Limosilactobacillus fermentum (strain NBRC 3956 / LMG 18251) (Lactobacillus fermentum), this protein is Small ribosomal subunit protein uS4.